The primary structure comprises 335 residues: Galactosylgalactosylxylosylprotein 3-beta-glucuronosyltransferase 3 (335 aa).

At 1–7 (MKLKLKN) the chain is on the cytoplasmic side. Residues 8 to 28 (VFLAYFLVSIAGLLYALVQLG) form a helical; Signal-anchor for type II membrane protein membrane-spanning segment. Residues 29–335 (QPCDCLPPLR…GRGSDPAIEV (307 aa)) are Lumenal-facing. UDP-alpha-D-glucuronate contacts are provided by residues 82 to 84 (PTY), Asp113, Arg156, Arg161, and 194 to 196 (DDD). A Mn(2+)-binding site is contributed by Asp196. The interval 243–252 (WEPSRPFPVD) is interaction with galactose moiety of substrate glycoprotein. The active-site Proton donor/acceptor is Glu281. Asn300 is a glycosylation site (N-linked (GlcNAc...) asparagine). 308 to 310 (HTR) contacts UDP-alpha-D-glucuronate. Over residues 312-322 (EKPKMKQEEQL) the composition is skewed to basic and acidic residues. The disordered stretch occupies residues 312-335 (EKPKMKQEEQLQRQGRGSDPAIEV).

The protein belongs to the glycosyltransferase 43 family. In terms of assembly, homodimer; disulfide-linked. Interacts with PXYLP1; the interaction increases the 2-phosphoxylose phosphatase activity of PXYLP1 during completion of linkage region formation in a B3GAT3-mediated manner. Mn(2+) serves as cofactor. In terms of processing, N-glycosylated. In terms of tissue distribution, ubiquitous (but weakly expressed in all tissues examined).

The protein resides in the golgi apparatus membrane. It is found in the golgi apparatus. Its subcellular location is the cis-Golgi network. It carries out the reaction 3-O-(beta-D-galactosyl-(1-&gt;3)-beta-D-galactosyl-(1-&gt;4)-beta-D-xylosyl)-L-seryl-[protein] + UDP-alpha-D-glucuronate = 3-O-(beta-D-GlcA-(1-&gt;3)-beta-D-Gal-(1-&gt;3)-beta-D-Gal-(1-&gt;4)-beta-D-Xyl)-L-seryl-[protein] + UDP + H(+). The protein operates within protein modification; protein glycosylation. With respect to regulation, inhibited by EDTA. Functionally, glycosaminoglycans biosynthesis. Involved in forming the linkage tetrasaccharide present in heparan sulfate and chondroitin sulfate. Transfers a glucuronic acid moiety from the uridine diphosphate-glucuronic acid (UDP-GlcUA) to the common linkage region trisaccharide Gal-beta-1,3-Gal-beta-1,4-Xyl covalently bound to a Ser residue at the glycosaminylglycan attachment site of proteoglycans. Can also play a role in the biosynthesis of l2/HNK-1 carbohydrate epitope on glycoproteins. Shows strict specificity for Gal-beta-1,3-Gal-beta-1,4-Xyl, exhibiting negligible incorporation into other galactoside substrates including Galbeta1-3Gal beta1-O-benzyl, Galbeta1-4GlcNAc and Galbeta1-4Glc. Stimulates 2-phosphoxylose phosphatase activity of PXYLP1 in presence of uridine diphosphate-glucuronic acid (UDP-GlcUA) during completion of linkage region formation. This is Galactosylgalactosylxylosylprotein 3-beta-glucuronosyltransferase 3 (B3GAT3) from Homo sapiens (Human).